Reading from the N-terminus, the 392-residue chain is 8-amino-7-oxononanoate synthase (392 aa).

108–109 (GF) provides a ligand contact to pyridoxal 5'-phosphate. Position 133 (H133) interacts with substrate. Pyridoxal 5'-phosphate contacts are provided by residues S180, 205-208 (DDAH), and 236-239 (TLSK). At K239 the chain carries N6-(pyridoxal phosphate)lysine. Residue T353 participates in substrate binding.

The protein belongs to the class-II pyridoxal-phosphate-dependent aminotransferase family. BioF subfamily. As to quaternary structure, homodimer. It depends on pyridoxal 5'-phosphate as a cofactor.

The catalysed reaction is 6-carboxyhexanoyl-[ACP] + L-alanine + H(+) = (8S)-8-amino-7-oxononanoate + holo-[ACP] + CO2. It participates in cofactor biosynthesis; biotin biosynthesis. Its function is as follows. Catalyzes the decarboxylative condensation of pimeloyl-[acyl-carrier protein] and L-alanine to produce 8-amino-7-oxononanoate (AON), [acyl-carrier protein], and carbon dioxide. The sequence is that of 8-amino-7-oxononanoate synthase from Bacillus pumilus (strain SAFR-032).